Consider the following 205-residue polypeptide: Holliday junction branch migration complex subunit RuvA (205 aa).

The tract at residues 1–64 (MIGRLRGIIL…EDAQLLFGFN (64 aa)) is domain I. Positions 65–143 (DKQERALFRE…GLSGDLFNSV (79 aa)) are domain II. The segment at 144-156 (SDIPLTSPANVDN) is flexible linker. A domain III region spans residues 157–205 (RVGEPEAEAAAALVALGYKPQEASRMISKIARPDADCETLIRDALRAAL).

This sequence belongs to the RuvA family. Homotetramer. Forms an RuvA(8)-RuvB(12)-Holliday junction (HJ) complex. HJ DNA is sandwiched between 2 RuvA tetramers; dsDNA enters through RuvA and exits via RuvB. An RuvB hexamer assembles on each DNA strand where it exits the tetramer. Each RuvB hexamer is contacted by two RuvA subunits (via domain III) on 2 adjacent RuvB subunits; this complex drives branch migration. In the full resolvosome a probable DNA-RuvA(4)-RuvB(12)-RuvC(2) complex forms which resolves the HJ.

It localises to the cytoplasm. The RuvA-RuvB-RuvC complex processes Holliday junction (HJ) DNA during genetic recombination and DNA repair, while the RuvA-RuvB complex plays an important role in the rescue of blocked DNA replication forks via replication fork reversal (RFR). RuvA specifically binds to HJ cruciform DNA, conferring on it an open structure. The RuvB hexamer acts as an ATP-dependent pump, pulling dsDNA into and through the RuvAB complex. HJ branch migration allows RuvC to scan DNA until it finds its consensus sequence, where it cleaves and resolves the cruciform DNA. In Pectobacterium atrosepticum (strain SCRI 1043 / ATCC BAA-672) (Erwinia carotovora subsp. atroseptica), this protein is Holliday junction branch migration complex subunit RuvA.